The primary structure comprises 291 residues: uncharacterized protein (291 aa).

An HTH araC/xylS-type domain is found at Lys191–Met289. DNA-binding regions (H-T-H motif) lie at residues Glu208–Leu229 and Val256–Met279.

This is an uncharacterized protein from Bacillus subtilis (strain 168).